Consider the following 586-residue polypeptide: MGGLEKKKYERGSATNYITRNKARKKLQLSLPDFRRLCILKGIYPHEPKHKKKVNKGSTAARTFYLIKDIKFLLHEPIVNKFREYKVFVRKLRKAYGKSEWNAVERLKDNKPSYKLDHIVKERYPTFIDALRDLDDALSMCFLFSTFPRTGKCHVQTIQLCRRLTVEFMHYVIAARALRKVFLSIKGIYYQAEVLGQPIVWIAPYAFSHDHPTDVDYRVMATFTEFYTTLLGFVNFRLYQSLNLHYPPKIESQAQAEMKVSEDTYALDSESSMEKLAALSASLARVVVPAVEEAEADEFPTDGEVTAQEEDRRKELEAQEKHKKLFEGLKFFLNREVPREALAFIIRSFGGDVSWDKSLCIGATYDSTDSGITHQIVDRPGQQTPIIGRYYVQPQWVFDCVNARLLLPVAEYFPGVQLPPHLSPFVSEKEGDYIPPEKLKLLALQRGEDPGNLEEEEEDEDDEGDDSEGDGDVAVENEEEVVEAESEEEEEAHLSALEQQRLGGKKPQVMAGTVKLEDRQRLAQEEESEAKRLAIMMMKKREKYLYQKIMFGKRRKIREANKLAEKRKAHDDAVRSEKKAKRTRPV.

The required for 28S ribosomal RNA processing stretch occupies residues 1–54 (MGGLEKKKYERGSATNYITRNKARKKLQLSLPDFRRLCILKGIYPHEPKHKKKV). The interval 1-257 (MGGLEKKKYE…PKIESQAQAE (257 aa)) is sufficient for nucleolar localization. At Lys98 the chain carries N6-acetyllysine. A sufficient for interaction with MAP1B region spans residues 305 to 414 (VTAQEEDRRK…LLLPVAEYFP (110 aa)). Residues 321 to 414 (KHKKLFEGLK…LLLPVAEYFP (94 aa)) enclose the BRCT domain. The tract at residues 447-508 (GEDPGNLEEE…QQRLGGKKPQ (62 aa)) is disordered. Acidic residues predominate over residues 451 to 491 (GNLEEEEEDEDDEGDDSEGDGDVAVENEEEVVEAESEEEEE). A Glycyl lysine isopeptide (Lys-Gly) (interchain with G-Cter in SUMO1); alternate cross-link involves residue Lys515. Lys515 is covalently cross-linked (Glycyl lysine isopeptide (Lys-Gly) (interchain with G-Cter in SUMO2); alternate). Residues 537-586 (MMKKREKYLYQKIMFGKRRKIREANKLAEKRKAHDDAVRSEKKAKRTRPV) are required for 28S ribosomal RNA processing. The span at 562–577 (KLAEKRKAHDDAVRSE) shows a compositional bias: basic and acidic residues. Positions 562 to 586 (KLAEKRKAHDDAVRSEKKAKRTRPV) are disordered.

It belongs to the pescadillo family. As to quaternary structure, component of the PeBoW complex, composed of BOP1, PES1 and WDR12. The complex is held together by BOP1, which interacts with PES1 via its N-terminal domain and with WDR12 via a high-affinity interaction between the seven-bladed beta-propeller domains of the 2 proteins. The PeBoW complex associates with the 66S pre-ribosome. The PeBoW complex also associates with DDX27, PES1 interacts directly with DDX27. Interacts with IRS1 and UBTF. May interact with MAP1B. In terms of processing, sumoylated.

The protein localises to the nucleus. It localises to the nucleolus. It is found in the nucleoplasm. Its subcellular location is the chromosome. Component of the PeBoW complex, which is required for maturation of 28S and 5.8S ribosomal RNAs and formation of the 60S ribosome. This chain is Pescadillo homolog (Pes1), found in Rattus norvegicus (Rat).